We begin with the raw amino-acid sequence, 454 residues long: Protein translocase subunit SecY (454 aa).

A run of 10 helical transmembrane segments spans residues Leu-43 to Ile-63, Phe-97 to Ile-117, Thr-144 to Phe-164, Ile-168 to Ile-188, Ser-201 to Phe-221, Ile-226 to Ile-246, Pro-289 to Leu-309, Ile-334 to Pro-354, Leu-390 to Phe-410, and Ile-414 to Leu-434.

This sequence belongs to the SecY/SEC61-alpha family. Component of the plastid Sec protein translocase complex, which is composed of at least SecY and SecE.

Its subcellular location is the plastid. It is found in the chloroplast thylakoid membrane. The central subunit of the protein translocation channel SecYE. Consists of two halves formed by TMs 1-5 and 6-10. These two domains form a lateral gate at the front which open onto the bilayer between TMs 2 and 7, and are clamped together by SecE at the back. The channel is closed by both a pore ring composed of hydrophobic SecY resides and a short helix (helix 2A) on the extracellular side of the membrane which forms a plug. The polypeptide is Protein translocase subunit SecY (Heterosigma akashiwo (strain NIES-293 / 8280G21-1)).